The sequence spans 247 residues: Probable transcriptional regulatory protein BT_0627 (247 aa).

Belongs to the TACO1 family.

The protein localises to the cytoplasm. This is Probable transcriptional regulatory protein BT_0627 from Bacteroides thetaiotaomicron (strain ATCC 29148 / DSM 2079 / JCM 5827 / CCUG 10774 / NCTC 10582 / VPI-5482 / E50).